We begin with the raw amino-acid sequence, 344 residues long: Ketol-acid reductoisomerase (NADP(+)) (344 aa).

Residues 2–181 form the KARI N-terminal Rossmann domain; that stretch reads EKIYYDADIS…GAGRAGILTT (180 aa). NADP(+)-binding positions include 25-28, arginine 48, serine 52, and 82-85; these read YGSQ and DERQ. Histidine 107 is a catalytic residue. Glycine 133 is a binding site for NADP(+). Residues 182 to 327 enclose the KARI C-terminal knotted domain; sequence TFREETETDL…RKLRSMMPFI (146 aa). 4 residues coordinate Mg(2+): aspartate 190, glutamate 194, glutamate 226, and glutamate 230. Residue serine 251 participates in substrate binding.

Belongs to the ketol-acid reductoisomerase family. It depends on Mg(2+) as a cofactor.

It carries out the reaction (2R)-2,3-dihydroxy-3-methylbutanoate + NADP(+) = (2S)-2-acetolactate + NADPH + H(+). It catalyses the reaction (2R,3R)-2,3-dihydroxy-3-methylpentanoate + NADP(+) = (S)-2-ethyl-2-hydroxy-3-oxobutanoate + NADPH + H(+). The protein operates within amino-acid biosynthesis; L-isoleucine biosynthesis; L-isoleucine from 2-oxobutanoate: step 2/4. It participates in amino-acid biosynthesis; L-valine biosynthesis; L-valine from pyruvate: step 2/4. In terms of biological role, involved in the biosynthesis of branched-chain amino acids (BCAA). Catalyzes an alkyl-migration followed by a ketol-acid reduction of (S)-2-acetolactate (S2AL) to yield (R)-2,3-dihydroxy-isovalerate. In the isomerase reaction, S2AL is rearranged via a Mg-dependent methyl migration to produce 3-hydroxy-3-methyl-2-ketobutyrate (HMKB). In the reductase reaction, this 2-ketoacid undergoes a metal-dependent reduction by NADPH to yield (R)-2,3-dihydroxy-isovalerate. In Alicyclobacillus acidocaldarius subsp. acidocaldarius (strain ATCC 27009 / DSM 446 / BCRC 14685 / JCM 5260 / KCTC 1825 / NBRC 15652 / NCIMB 11725 / NRRL B-14509 / 104-IA) (Bacillus acidocaldarius), this protein is Ketol-acid reductoisomerase (NADP(+)).